Reading from the N-terminus, the 220-residue chain is Eukaryotic translation initiation factor 3 subunit B (220 aa).

The segment at 1 to 94 is sufficient for interaction with HCR1 and TIF32; sequence MPEPIAFDES…LIIELDSAAA (94 aa). The sufficient for interaction with PIC8 stretch occupies residues 1–220; that stretch reads MPEPIAFDES…GVQAWGGERI (220 aa). The region spanning 37 to 120 is the RRM domain; that stretch reads HFVICDGAPI…HRLAVNKLPD (84 aa).

This sequence belongs to the eIF-3 subunit B family. As to quaternary structure, component of the eukaryotic translation initiation factor 3 (eIF-3) complex.

The protein resides in the cytoplasm. Functionally, RNA-binding component of the eukaryotic translation initiation factor 3 (eIF-3) complex, which is involved in protein synthesis of a specialized repertoire of mRNAs and, together with other initiation factors, stimulates binding of mRNA and methionyl-tRNAi to the 40S ribosome. The eIF-3 complex specifically targets and initiates translation of a subset of mRNAs involved in cell proliferation. The protein is Eukaryotic translation initiation factor 3 subunit B (TIF32) of Pichia angusta (Yeast).